The sequence spans 62 residues: Large ribosomal subunit protein bL28 (62 aa).

The protein belongs to the bacterial ribosomal protein bL28 family.

The protein is Large ribosomal subunit protein bL28 of Koribacter versatilis (strain Ellin345).